The sequence spans 293 residues: ATP synthase gamma chain (293 aa).

The protein belongs to the ATPase gamma chain family. As to quaternary structure, F-type ATPases have 2 components, CF(1) - the catalytic core - and CF(0) - the membrane proton channel. CF(1) has five subunits: alpha(3), beta(3), gamma(1), delta(1), epsilon(1). CF(0) has three main subunits: a, b and c.

Its subcellular location is the cell membrane. Functionally, produces ATP from ADP in the presence of a proton gradient across the membrane. The gamma chain is believed to be important in regulating ATPase activity and the flow of protons through the CF(0) complex. This Methylacidiphilum infernorum (isolate V4) (Methylokorus infernorum (strain V4)) protein is ATP synthase gamma chain.